We begin with the raw amino-acid sequence, 120 residues long: Fumarate reductase subunit D (120 aa).

The next 3 helical transmembrane spans lie at 25–45 (FAMLTPVTILVLGILVPLGVI), 55–75 (VAGFVTSIIGALFVIGSISMP), and 100–120 (IACYATAALATVLSIVFIFMI).

The protein belongs to the FrdD family. Part of an enzyme complex containing four subunits: a flavoprotein (FrdA), an iron-sulfur protein (FrdB), and two hydrophobic anchor proteins (FrdC and FrdD).

It is found in the cell inner membrane. Functionally, anchors the catalytic components of the fumarate reductase complex to the cell membrane, binds quinones. This Aliivibrio salmonicida (strain LFI1238) (Vibrio salmonicida (strain LFI1238)) protein is Fumarate reductase subunit D.